Here is a 555-residue protein sequence, read N- to C-terminus: CTP synthase (555 aa).

The interval 1–265 is amidoligase domain; that stretch reads MTRYIFITGG…GNRVCEKLNI (265 aa). Ser13 is a binding site for CTP. Position 13 (Ser13) interacts with UTP. ATP is bound by residues 14 to 19 and Asp71; that span reads SLGKGI. Mg(2+) is bound by residues Asp71 and Glu139. Residues 146-148, 186-191, and Lys222 each bind CTP; these read DIE and KTKPTQ. Residues 186 to 191 and Lys222 each bind UTP; that span reads KTKPTQ. The Glutamine amidotransferase type-1 domain maps to 290–541; the sequence is TVAVVGKYVD…IKAGLAAKEA (252 aa). Residue Gly351 participates in L-glutamine binding. Cys378 serves as the catalytic Nucleophile; for glutamine hydrolysis. Residues 379–382, Glu402, and Arg469 contribute to the L-glutamine site; that span reads LGMQ. Catalysis depends on residues His514 and Glu516.

Belongs to the CTP synthase family. In terms of assembly, homotetramer.

The catalysed reaction is UTP + L-glutamine + ATP + H2O = CTP + L-glutamate + ADP + phosphate + 2 H(+). The enzyme catalyses L-glutamine + H2O = L-glutamate + NH4(+). It carries out the reaction UTP + NH4(+) + ATP = CTP + ADP + phosphate + 2 H(+). It participates in pyrimidine metabolism; CTP biosynthesis via de novo pathway; CTP from UDP: step 2/2. With respect to regulation, allosterically activated by GTP, when glutamine is the substrate; GTP has no effect on the reaction when ammonia is the substrate. The allosteric effector GTP functions by stabilizing the protein conformation that binds the tetrahedral intermediate(s) formed during glutamine hydrolysis. Inhibited by the product CTP, via allosteric rather than competitive inhibition. Catalyzes the ATP-dependent amination of UTP to CTP with either L-glutamine or ammonia as the source of nitrogen. Regulates intracellular CTP levels through interactions with the four ribonucleotide triphosphates. The polypeptide is CTP synthase (Coxiella burnetii (strain Dugway 5J108-111)).